A 294-amino-acid chain; its full sequence is MRTEYAARLPVDWRDYVELCKPRVVLLMLLTVIVGMYLAAPGWVSLRLIAFTLLGIGLCAGSAAAINHLVDRHIDSIMARTKKRPVAYGRVSVKQALWFAVIIGLMGLSLLILFVNQLTALLTFVTLIGYAGVYTGYLKRATSQNIVIGGLAGAAPPLLGWTAVTGQLDPQALLLVLIIFTWTPPHFWALAIYRYKEYQDAEIPMLPVTHGIQFTKLNIYLYTVLLLVVSLLPFVVSMSGWIYLLGALVLGIRFLVWAHKLYFTDKPVVAMQTFRFSILYLMLLFVFLLVDHYF.

The next 9 helical transmembrane spans lie at 24–44 (VVLL…PGWV), 48–68 (LIAF…AINH), 96–116 (ALWF…LFVN), 118–138 (LTAL…TGYL), 146–166 (IVIG…AVTG), 172–192 (ALLL…ALAI), 224–244 (VLLL…WIYL), 245–265 (LGAL…YFTD), and 268–288 (VVAM…FVFL).

This sequence belongs to the UbiA prenyltransferase family. Protoheme IX farnesyltransferase subfamily.

Its subcellular location is the cell inner membrane. It carries out the reaction heme b + (2E,6E)-farnesyl diphosphate + H2O = Fe(II)-heme o + diphosphate. It participates in porphyrin-containing compound metabolism; heme O biosynthesis; heme O from protoheme: step 1/1. In terms of biological role, converts heme B (protoheme IX) to heme O by substitution of the vinyl group on carbon 2 of heme B porphyrin ring with a hydroxyethyl farnesyl side group. This chain is Protoheme IX farnesyltransferase, found in Legionella pneumophila (strain Paris).